The primary structure comprises 450 residues: Glucose-6-phosphate isomerase (450 aa).

Position 38 is a phosphothreonine (Thr38). The Proton donor role is filled by Glu290. Catalysis depends on residues His311 and Lys425.

It belongs to the GPI family.

It localises to the cytoplasm. It carries out the reaction alpha-D-glucose 6-phosphate = beta-D-fructose 6-phosphate. It functions in the pathway carbohydrate biosynthesis; gluconeogenesis. The protein operates within carbohydrate degradation; glycolysis; D-glyceraldehyde 3-phosphate and glycerone phosphate from D-glucose: step 2/4. In terms of biological role, catalyzes the reversible isomerization of glucose-6-phosphate to fructose-6-phosphate. The polypeptide is Glucose-6-phosphate isomerase (Bacillus subtilis (strain 168)).